A 703-amino-acid polypeptide reads, in one-letter code: DNA ligase (703 aa).

NAD(+) is bound by residues 54–58 (DAEYD), 103–104 (SL), and glutamate 132. Lysine 134 (N6-AMP-lysine intermediate) is an active-site residue. NAD(+) is bound by residues arginine 155, glutamate 192, lysine 308, and lysine 332. Positions 426, 429, 444, and 450 each coordinate Zn(2+). Residues 608–698 (EGPGPLDGVV…ADAARALAVP (91 aa)) enclose the BRCT domain.

It belongs to the NAD-dependent DNA ligase family. LigA subfamily. Requires Mg(2+) as cofactor. The cofactor is Mn(2+).

The catalysed reaction is NAD(+) + (deoxyribonucleotide)n-3'-hydroxyl + 5'-phospho-(deoxyribonucleotide)m = (deoxyribonucleotide)n+m + AMP + beta-nicotinamide D-nucleotide.. Its function is as follows. DNA ligase that catalyzes the formation of phosphodiester linkages between 5'-phosphoryl and 3'-hydroxyl groups in double-stranded DNA using NAD as a coenzyme and as the energy source for the reaction. It is essential for DNA replication and repair of damaged DNA. The sequence is that of DNA ligase from Parafrankia sp. (strain EAN1pec).